Reading from the N-terminus, the 183-residue chain is RNA 2',3'-cyclic phosphodiesterase (183 aa).

His44 functions as the Proton donor in the catalytic mechanism. 2 short sequence motifs (HXTX) span residues 44 to 47 (HITL) and 130 to 133 (HMTL). His130 serves as the catalytic Proton acceptor.

The protein belongs to the 2H phosphoesterase superfamily. ThpR family.

The enzyme catalyses a 3'-end 2',3'-cyclophospho-ribonucleotide-RNA + H2O = a 3'-end 2'-phospho-ribonucleotide-RNA + H(+). Functionally, hydrolyzes RNA 2',3'-cyclic phosphodiester to an RNA 2'-phosphomonoester. This chain is RNA 2',3'-cyclic phosphodiesterase (ytlP), found in Bacillus subtilis (strain 168).